Reading from the N-terminus, the 756-residue chain is Centromere protein I (756 aa).

The disordered stretch occupies residues 1–60 (MSPQKRVKNVQAQNRTSQGSSSFQTTLSAWKVKQDPSNSKNISKHGQNNPVGDYEHADDQ). Composition is skewed to polar residues over residues 10–28 (VQAQNRTSQGSSSFQTTLS) and 35–50 (DPSNSKNISKHGQNNP).

The protein belongs to the CENP-I/CTF3 family. In terms of assembly, component of the CENPA-CAD complex, composed of CENPI, CENPK, CENPL, CENPO, CENPP, CENPQ, CENPR and CENPS. The CENPA-CAD complex interacts with the CENPA-NAC complex, at least composed of CENPA, CENPC, CENPH, CENPM, CENPN, CENPT and CENPU. Interacts with SENP6. In terms of processing, sumoylated. Sumoylated form can be polyubiquitinated by RNF4, leading to its degradation. Desumoylation by SENP6 prevents its degradation.

Its subcellular location is the nucleus. The protein resides in the chromosome. It localises to the centromere. Component of the CENPA-CAD (nucleosome distal) complex, a complex recruited to centromeres which is involved in assembly of kinetochore proteins, mitotic progression and chromosome segregation. May be involved in incorporation of newly synthesized CENPA into centromeres via its interaction with the CENPA-NAC complex. Required for the localization of CENPF, MAD1L1 and MAD2 (MAD2L1 or MAD2L2) to kinetochores. Involved in the response of gonadal tissues to follicle-stimulating hormone. This chain is Centromere protein I (CENPI), found in Homo sapiens (Human).